Consider the following 240-residue polypeptide: Late expression factor 5 homolog (240 aa).

It belongs to the baculoviridae LEF-5 family.

Its function is as follows. Required for late and very late gene expression. This is Late expression factor 5 homolog from Tortricidae (ClGV).